The following is a 313-amino-acid chain: Cytosolic Fe-S cluster assembly factor NUBP1 homolog (313 aa).

The disordered stretch occupies residues 1–25; sequence MSDVPEDANAGCPGTGSAGAGKASG. Residues Cys12, Cys26, Cys29, and Cys35 each coordinate [4Fe-4S] cluster. 66–73 contributes to the ATP binding site; the sequence is GKGGVGKS. Cys240 and Cys243 together coordinate [4Fe-4S] cluster.

The protein belongs to the Mrp/NBP35 ATP-binding proteins family. NUBP1/NBP35 subfamily. As to quaternary structure, heterotetramer of 2 NUBP1 and 2 NUBP2 chains. It depends on [4Fe-4S] cluster as a cofactor.

It is found in the cytoplasm. The protein resides in the cell projection. Functionally, component of the cytosolic iron-sulfur (Fe/S) protein assembly (CIA) machinery. Required for maturation of extramitochondrial Fe-S proteins. The NUBP1-NUBP2 heterotetramer forms a Fe-S scaffold complex, mediating the de novo assembly of an Fe-S cluster and its transfer to target apoproteins. Regulates cilium formation and structure. In Caenorhabditis briggsae, this protein is Cytosolic Fe-S cluster assembly factor NUBP1 homolog.